The sequence spans 607 residues: DNA polymerase (607 aa).

The 213-residue stretch at 1 to 213 (MIELRHEVQG…CSALAPLVPD (213 aa)) folds into the 3'-5' exonuclease domain. A polymerase region spans residues 214–607 (VSRPLVPYEH…SWGSLYGADY (394 aa)).

It belongs to the DNA polymerase type-A family.

It catalyses the reaction DNA(n) + a 2'-deoxyribonucleoside 5'-triphosphate = DNA(n+1) + diphosphate. Its function is as follows. Replicates viral genomic DNA. This polymerase possesses two enzymatic activities: DNA synthesis (polymerase) and an exonucleolytic activity that degrades single-stranded DNA in the 3'-5' direction. The protein is DNA polymerase (44) of Mycobacterium phage D29 (Mycobacteriophage D29).